Reading from the N-terminus, the 449-residue chain is Bifunctional protein GlmU (449 aa).

Positions 1-228 (MSTALVILAA…EAETLGINSR (228 aa)) are pyrophosphorylase. UDP-N-acetyl-alpha-D-glucosamine is bound by residues 8–11 (LAAG), K22, Q75, 80–81 (GT), 103–105 (YGD), G140, E154, N169, and N226. Residue D105 coordinates Mg(2+). N226 lines the Mg(2+) pocket. A linker region spans residues 229 to 249 (ADLAAAEAVFQAHARAELLDI). The interval 250–449 (GVTLTAPETV…RAKKAAKAKG (200 aa)) is N-acetyltransferase. UDP-N-acetyl-alpha-D-glucosamine is bound by residues R315 and K333. Residue H345 is the Proton acceptor of the active site. Residues Y348 and N359 each coordinate UDP-N-acetyl-alpha-D-glucosamine. Residues A362, 368-369 (NY), S387, T405, and R422 contribute to the acetyl-CoA site.

The protein in the N-terminal section; belongs to the N-acetylglucosamine-1-phosphate uridyltransferase family. This sequence in the C-terminal section; belongs to the transferase hexapeptide repeat family. In terms of assembly, homotrimer. Mg(2+) serves as cofactor.

It is found in the cytoplasm. The catalysed reaction is alpha-D-glucosamine 1-phosphate + acetyl-CoA = N-acetyl-alpha-D-glucosamine 1-phosphate + CoA + H(+). It carries out the reaction N-acetyl-alpha-D-glucosamine 1-phosphate + UTP + H(+) = UDP-N-acetyl-alpha-D-glucosamine + diphosphate. Its pathway is nucleotide-sugar biosynthesis; UDP-N-acetyl-alpha-D-glucosamine biosynthesis; N-acetyl-alpha-D-glucosamine 1-phosphate from alpha-D-glucosamine 6-phosphate (route II): step 2/2. It functions in the pathway nucleotide-sugar biosynthesis; UDP-N-acetyl-alpha-D-glucosamine biosynthesis; UDP-N-acetyl-alpha-D-glucosamine from N-acetyl-alpha-D-glucosamine 1-phosphate: step 1/1. The protein operates within bacterial outer membrane biogenesis; LPS lipid A biosynthesis. Catalyzes the last two sequential reactions in the de novo biosynthetic pathway for UDP-N-acetylglucosamine (UDP-GlcNAc). The C-terminal domain catalyzes the transfer of acetyl group from acetyl coenzyme A to glucosamine-1-phosphate (GlcN-1-P) to produce N-acetylglucosamine-1-phosphate (GlcNAc-1-P), which is converted into UDP-GlcNAc by the transfer of uridine 5-monophosphate (from uridine 5-triphosphate), a reaction catalyzed by the N-terminal domain. The chain is Bifunctional protein GlmU from Ruegeria sp. (strain TM1040) (Silicibacter sp.).